A 227-amino-acid polypeptide reads, in one-letter code: Pro-thyrotropin-releasing hormone-A (227 aa).

The signal sequence occupies residues 1-15; it reads MVSVWWLLLLGTTVS. At Q75 the chain carries Pyrrolidone carboxylic acid. P77 is modified (proline amide). Q89 is modified (pyrrolidone carboxylic acid). P91 is subject to Proline amide. Q107 is modified (pyrrolidone carboxylic acid). 2 disordered regions span residues 107-128 and 151-204; these read QHPG…KREE and RRQH…PCEG. Residue P109 is modified to Proline amide. Over residues 112–128 the composition is skewed to basic and acidic residues; that stretch reads RFVDDVEKRQHPGKREE. Q121 carries the post-translational modification Pyrrolidone carboxylic acid. The residue at position 123 (P123) is a Proline amide. Q153 is modified (pyrrolidone carboxylic acid). Residue P155 is modified to Proline amide. Pyrrolidone carboxylic acid is present on Q168. P170 carries the proline amide modification. Positions 184–201 are enriched in basic and acidic residues; sequence ENSKEVGKRQHPGKRYDP. Pyrrolidone carboxylic acid is present on Q193. The residue at position 195 (P195) is a Proline amide.

The protein belongs to the TRH family.

The protein resides in the secreted. This chain is Pro-thyrotropin-releasing hormone-A (trh-a), found in Xenopus laevis (African clawed frog).